The sequence spans 157 residues: MSIHEFSARLINGEEKALSDYKDQVLLIVNTASKCGLTPQYEELQILYETYKDQGFTVLGFPSNQFMNQEPGDHNEIAAFCERNYGVSFPIFEKVKVNGKEAHPLFQYLTSQQGGLFTEKIKWNFTKFLIDRSGNVVKRYAPSTSPIKIKDDIEELL.

Cys35 is an active-site residue.

The protein belongs to the glutathione peroxidase family.

The chain is Glutathione peroxidase homolog BsaA (bsaA) from Halalkalibacterium halodurans (strain ATCC BAA-125 / DSM 18197 / FERM 7344 / JCM 9153 / C-125) (Bacillus halodurans).